A 444-amino-acid polypeptide reads, in one-letter code: tRNA modification GTPase MnmE (444 aa).

Positions 21, 79, and 118 each coordinate (6S)-5-formyl-5,6,7,8-tetrahydrofolate. A TrmE-type G domain is found at 215–365 (GLNVVIVGKP…LVNEIKTNLK (151 aa)). K(+) is bound at residue asparagine 225. Residues 225–230 (NVGKSS), 244–250 (SDIKGTT), and 269–272 (DTAG) each bind GTP. Residue serine 229 coordinates Mg(2+). Residues serine 244, isoleucine 246, and threonine 249 each coordinate K(+). Threonine 250 contributes to the Mg(2+) binding site. Lysine 444 lines the (6S)-5-formyl-5,6,7,8-tetrahydrofolate pocket.

It belongs to the TRAFAC class TrmE-Era-EngA-EngB-Septin-like GTPase superfamily. TrmE GTPase family. Homodimer. Heterotetramer of two MnmE and two MnmG subunits. The cofactor is K(+).

It is found in the cytoplasm. In terms of biological role, exhibits a very high intrinsic GTPase hydrolysis rate. Involved in the addition of a carboxymethylaminomethyl (cmnm) group at the wobble position (U34) of certain tRNAs, forming tRNA-cmnm(5)s(2)U34. This Malacoplasma penetrans (strain HF-2) (Mycoplasma penetrans) protein is tRNA modification GTPase MnmE.